The primary structure comprises 384 residues: Lipid-A-disaccharide synthase (384 aa).

Belongs to the LpxB family.

The catalysed reaction is a lipid X + a UDP-2-N,3-O-bis[(3R)-3-hydroxyacyl]-alpha-D-glucosamine = a lipid A disaccharide + UDP + H(+). The protein operates within bacterial outer membrane biogenesis; LPS lipid A biosynthesis. Condensation of UDP-2,3-diacylglucosamine and 2,3-diacylglucosamine-1-phosphate to form lipid A disaccharide, a precursor of lipid A, a phosphorylated glycolipid that anchors the lipopolysaccharide to the outer membrane of the cell. The polypeptide is Lipid-A-disaccharide synthase (Gloeothece citriformis (strain PCC 7424) (Cyanothece sp. (strain PCC 7424))).